The following is a 356-amino-acid chain: Stomatin-like protein 2, mitochondrial (356 aa).

The transit peptide at 1–28 (MLARAARGTGALLLKGSVQASARAPRRA) directs the protein to the mitochondrion. Ser17 bears the Phosphoserine; by PKC/PRKCZ mark. A Phosphotyrosine modification is found at Tyr124. Lys145 is subject to N6-acetyllysine; alternate. Residue Lys145 is modified to N6-succinyllysine; alternate. Residues 215–252 (INVAEGKKQAQILASEAEKAEQINQAAGEASAVLAKAK) are a coiled coil. Lys233 bears the N6-acetyllysine mark. The tract at residues 326–356 (EAQDSVSSRSSRDVRSTDASLDEELDRVKLS) is disordered. A Phosphoserine modification is found at Ser330.

This sequence belongs to the band 7/mec-2 family. As to quaternary structure, forms homooligomers. Interacts with MFN2; may form heterooligomers with this mediator of mitochondrial fusion. Interacts with PHB1 and PHB2; stabilizes and recruits them to cardiolipin-enriched mitochondrial membranes. Interacts with CACNA2D2.

The protein localises to the cell membrane. The protein resides in the mitochondrion. It is found in the mitochondrion inner membrane. Its subcellular location is the mitochondrion intermembrane space. It localises to the membrane raft. The protein localises to the cytoplasm. The protein resides in the cytoskeleton. Its function is as follows. Mitochondrial protein that probably regulates the biogenesis and the activity of mitochondria. Stimulates cardiolipin biosynthesis, binds cardiolipin-enriched membranes where it recruits and stabilizes some proteins including prohibitin and may therefore act in the organization of functional microdomains in mitochondrial membranes. Through regulation of the mitochondrial function may play a role into several biological processes including cell migration, cell proliferation, T-cell activation, calcium homeostasis and cellular response to stress. May play a role in calcium homeostasis through negative regulation of calcium efflux from mitochondria. Required for mitochondrial hyperfusion a pro-survival cellular response to stress which results in increased ATP production by mitochondria. May also regulate the organization of functional domains at the plasma membrane and play a role in T-cell activation through association with the T-cell receptor signaling complex and its regulation. The polypeptide is Stomatin-like protein 2, mitochondrial (STOML2) (Bos taurus (Bovine)).